Here is a 294-residue protein sequence, read N- to C-terminus: Acetyl-coenzyme A carboxylase carboxyl transferase subunit beta (294 aa).

The CoA carboxyltransferase N-terminal domain maps to 30–294 (IMTKCPECKK…PEVGGEADGE (265 aa)). Zn(2+) is bound by residues Cys34, Cys37, Cys53, and Cys56. The segment at 34 to 56 (CPECKKIMYTKELQKNLMVCNYC) adopts a C4-type zinc-finger fold.

This sequence belongs to the AccD/PCCB family. In terms of assembly, acetyl-CoA carboxylase is a heterohexamer composed of biotin carboxyl carrier protein (AccB), biotin carboxylase (AccC) and two subunits each of ACCase subunit alpha (AccA) and ACCase subunit beta (AccD). Zn(2+) serves as cofactor.

Its subcellular location is the cytoplasm. The enzyme catalyses N(6)-carboxybiotinyl-L-lysyl-[protein] + acetyl-CoA = N(6)-biotinyl-L-lysyl-[protein] + malonyl-CoA. The protein operates within lipid metabolism; malonyl-CoA biosynthesis; malonyl-CoA from acetyl-CoA: step 1/1. Component of the acetyl coenzyme A carboxylase (ACC) complex. Biotin carboxylase (BC) catalyzes the carboxylation of biotin on its carrier protein (BCCP) and then the CO(2) group is transferred by the transcarboxylase to acetyl-CoA to form malonyl-CoA. This is Acetyl-coenzyme A carboxylase carboxyl transferase subunit beta from Listeria monocytogenes serotype 4b (strain F2365).